The chain runs to 431 residues: Enolase (431 aa).

Q167 provides a ligand contact to (2R)-2-phosphoglycerate. The active-site Proton donor is E209. The Mg(2+) site is built by D246, E289, and D316. (2R)-2-phosphoglycerate-binding residues include K341, R370, S371, and K392. The active-site Proton acceptor is K341.

The protein belongs to the enolase family. In terms of assembly, component of the RNA degradosome, a multiprotein complex involved in RNA processing and mRNA degradation. The cofactor is Mg(2+).

Its subcellular location is the cytoplasm. The protein resides in the secreted. It is found in the cell surface. The enzyme catalyses (2R)-2-phosphoglycerate = phosphoenolpyruvate + H2O. It functions in the pathway carbohydrate degradation; glycolysis; pyruvate from D-glyceraldehyde 3-phosphate: step 4/5. Its function is as follows. Catalyzes the reversible conversion of 2-phosphoglycerate (2-PG) into phosphoenolpyruvate (PEP). It is essential for the degradation of carbohydrates via glycolysis. The chain is Enolase from Chromohalobacter salexigens (strain ATCC BAA-138 / DSM 3043 / CIP 106854 / NCIMB 13768 / 1H11).